A 355-amino-acid polypeptide reads, in one-letter code: Probable cinnamyl alcohol dehydrogenase (355 aa).

Position 47 (C47) interacts with Zn(2+). S49 provides a ligand contact to NADP(+). Residues H69, E70, C100, C103, C106, C114, and C162 each coordinate Zn(2+). NADP(+) contacts are provided by residues T166, 187-192 (GLGGVG), 210-215 (SSSDKK), T250, G274, and 297-299 (SFI).

This sequence belongs to the zinc-containing alcohol dehydrogenase family. As to quaternary structure, homodimer. Zn(2+) serves as cofactor.

It carries out the reaction (E)-cinnamyl alcohol + NADP(+) = (E)-cinnamaldehyde + NADPH + H(+). It catalyses the reaction (E)-coniferol + NADP(+) = (E)-coniferaldehyde + NADPH + H(+). The catalysed reaction is (E)-sinapyl alcohol + NADP(+) = (E)-sinapaldehyde + NADPH + H(+). The enzyme catalyses (E)-4-coumaroyl alcohol + NADP(+) = (E)-4-coumaraldehyde + NADPH + H(+). It carries out the reaction (E)-caffeyl alcohol + NADP(+) = (E)-caffeyl aldehyde + NADPH + H(+). The protein operates within aromatic compound metabolism; phenylpropanoid biosynthesis. Its function is as follows. Involved in lignin biosynthesis. Catalyzes the final step specific for the production of lignin monomers. Catalyzes the NADPH-dependent reduction of coniferaldehyde, 5-hydroxyconiferaldehyde, sinapaldehyde, 4-coumaraldehyde and caffeyl aldehyde to their respective alcohols. This chain is Probable cinnamyl alcohol dehydrogenase (CAD1), found in Eucalyptus botryoides (Southern mahogany).